The primary structure comprises 433 residues: Phosphomethylpyrimidine synthase (433 aa).

Substrate is bound by residues Asn69, Met98, Tyr127, His163, 185–187 (SRG), 226–229 (DACR), and Glu265. A Zn(2+)-binding site is contributed by His269. Tyr292 provides a ligand contact to substrate. His333 is a Zn(2+) binding site. Residues Cys409, Cys412, and Cys416 each coordinate [4Fe-4S] cluster.

Belongs to the ThiC family. Requires [4Fe-4S] cluster as cofactor.

It catalyses the reaction 5-amino-1-(5-phospho-beta-D-ribosyl)imidazole + S-adenosyl-L-methionine = 4-amino-2-methyl-5-(phosphooxymethyl)pyrimidine + CO + 5'-deoxyadenosine + formate + L-methionine + 3 H(+). It participates in cofactor biosynthesis; thiamine diphosphate biosynthesis. In terms of biological role, catalyzes the synthesis of the hydroxymethylpyrimidine phosphate (HMP-P) moiety of thiamine from aminoimidazole ribotide (AIR) in a radical S-adenosyl-L-methionine (SAM)-dependent reaction. The polypeptide is Phosphomethylpyrimidine synthase (Clostridioides difficile (strain 630) (Peptoclostridium difficile)).